The sequence spans 670 residues: Glycine--tRNA ligase beta subunit (670 aa).

This sequence belongs to the class-II aminoacyl-tRNA synthetase family. As to quaternary structure, tetramer of two alpha and two beta subunits.

It is found in the cytoplasm. It catalyses the reaction tRNA(Gly) + glycine + ATP = glycyl-tRNA(Gly) + AMP + diphosphate. The protein is Glycine--tRNA ligase beta subunit of Thermotoga neapolitana (strain ATCC 49049 / DSM 4359 / NBRC 107923 / NS-E).